Reading from the N-terminus, the 156-residue chain is Oxidized purine nucleoside triphosphate hydrolase (156 aa).

The region spanning threonine 3–lysine 132 is the Nudix hydrolase domain. A 2-oxo-dATP-binding site is contributed by threonine 8. 8-oxo-dGTP is bound by residues threonine 8, lysine 23, asparagine 33, phenylalanine 35 to lysine 38, and glutamate 52. 2-oxo-dATP contacts are provided by residues asparagine 33 and phenylalanine 35–lysine 38. Mg(2+) contacts are provided by glycine 36, glutamate 52, glutamate 55, glutamate 56, and glutamate 100. The Nudix box signature appears at glycine 37–glycine 58. Residues glutamate 56, glutamate 100, and tryptophan 117 to aspartate 120 contribute to the 8-oxo-dGTP site. Tryptophan 117–aspartate 120 lines the 2-oxo-dATP pocket.

The protein belongs to the Nudix hydrolase family. As to quaternary structure, monomer. Mg(2+) is required as a cofactor. High expression levels detected in thymus, liver, spleen, kidney, testis and large intestine, with lower levels detected in brain, heart, lung and stomach (at protein level). Expressed in kidney, liver and small intestine.

Its subcellular location is the cytoplasm. The protein localises to the nucleus. It is found in the nucleus membrane. It localises to the cytoplasmic vesicle. The protein resides in the secretory vesicle. Its subcellular location is the acrosome. The enzyme catalyses 2-oxo-dATP + H2O = 2-oxo-dAMP + diphosphate + H(+). It catalyses the reaction 2-oxo-ATP + H2O = 2-oxo-AMP + diphosphate + H(+). The catalysed reaction is 8-oxo-dGTP + H2O = 8-oxo-dGMP + diphosphate + H(+). It carries out the reaction 8-oxo-dATP + H2O = 8-oxo-dAMP + diphosphate + H(+). The enzyme catalyses O(6)-methyl-dGTP + H2O = O(6)-methyl-dGMP + diphosphate + H(+). It catalyses the reaction N(6)-methyl-dATP + H2O = N(6)-methyl-dAMP + diphosphate + H(+). The catalysed reaction is N(6)-methyl-ATP + H2O = N(6)-methyl-AMP + diphosphate + H(+). Oxidized purine nucleoside triphosphate hydrolase which is a prominent sanitizer of the oxidized nucleotide pool. Catalyzes the hydrolysis of 2-oxo-dATP (2-hydroxy-dATP) into 2-oxo-dAMP. Also has a significant hydrolase activity toward 2-oxo-ATP, 8-oxo-dGTP and 8-oxo-dATP. Through the hydrolysis of oxidized purine nucleoside triphosphates, prevents their incorporation into DNA and the subsequent transversions A:T to C:G and G:C to T:A. Also catalyzes the hydrolysis of methylated purine nucleoside triphosphate preventing their integration into DNA. Through this antimutagenic activity protects cells from oxidative stress. This Mus musculus (Mouse) protein is Oxidized purine nucleoside triphosphate hydrolase (Nudt1).